The following is a 493-amino-acid chain: Glutamyl-tRNA(Gln) amidotransferase subunit A (493 aa).

Residues Lys-78 and Ser-158 each act as charge relay system in the active site. Ser-182 acts as the Acyl-ester intermediate in catalysis.

The protein belongs to the amidase family. GatA subfamily. In terms of assembly, heterotrimer of A, B and C subunits.

The catalysed reaction is L-glutamyl-tRNA(Gln) + L-glutamine + ATP + H2O = L-glutaminyl-tRNA(Gln) + L-glutamate + ADP + phosphate + H(+). In terms of biological role, allows the formation of correctly charged Gln-tRNA(Gln) through the transamidation of misacylated Glu-tRNA(Gln) in organisms which lack glutaminyl-tRNA synthetase. The reaction takes place in the presence of glutamine and ATP through an activated gamma-phospho-Glu-tRNA(Gln). The polypeptide is Glutamyl-tRNA(Gln) amidotransferase subunit A (Rickettsia africae (strain ESF-5)).